Consider the following 130-residue polypeptide: Small ribosomal subunit protein uS11c (130 aa).

It belongs to the universal ribosomal protein uS11 family. As to quaternary structure, part of the 30S ribosomal subunit.

It is found in the plastid. The protein resides in the chloroplast. The chain is Small ribosomal subunit protein uS11c from Chlorokybus atmophyticus (Soil alga).